A 381-amino-acid chain; its full sequence is Cytochrome b (381 aa).

Transmembrane regions (helical) follow at residues 33-53, 77-98, 113-133, and 178-198; these read FGSLLGICLIIQILTGLFLAM, WLLRNLHANGASMFFMCLFLHV, WNIGVILLLTVMATAFVGYVL, and FFAFHFILPFIIVAFAAVHLL. Residues His-83 and His-97 each coordinate heme b. Residues His-182 and His-196 each coordinate heme b. Position 201 (His-201) interacts with a ubiquinone. A run of 4 helical transmembrane segments spans residues 226–246, 288–308, 320–340, and 347–367; these read IKDALGLIFLILSLLLLGLFS, LGGVLALLASILILLIIPLLH, IFQTLFWILTADLITLTWIGG, and FIIIGQLALMLYFLLILALMP.

The protein belongs to the cytochrome b family. As to quaternary structure, the cytochrome bc1 complex contains 11 subunits: 3 respiratory subunits (MT-CYB, CYC1 and UQCRFS1), 2 core proteins (UQCRC1 and UQCRC2) and 6 low-molecular weight proteins (UQCRH/QCR6, UQCRB/QCR7, UQCRQ/QCR8, UQCR10/QCR9, UQCR11/QCR10 and a cleavage product of UQCRFS1). This cytochrome bc1 complex then forms a dimer. The cofactor is heme b.

The protein localises to the mitochondrion inner membrane. Its function is as follows. Component of the ubiquinol-cytochrome c reductase complex (complex III or cytochrome b-c1 complex) that is part of the mitochondrial respiratory chain. The b-c1 complex mediates electron transfer from ubiquinol to cytochrome c. Contributes to the generation of a proton gradient across the mitochondrial membrane that is then used for ATP synthesis. This is Cytochrome b (MT-CYB) from Dasykaluta rosamondae (Little red marsupial mouse).